A 291-amino-acid chain; its full sequence is Methyl-CpG-binding domain protein 3 (291 aa).

An MBD domain is found at 1 to 72; sequence MERKRWECPA…DFRTGKMLMS (72 aa). The required for interaction with MBD2 stretch occupies residues 1–80; sequence MERKRWECPA…MSKMNKSRQR (80 aa). Phosphoserine is present on Ser-56. Residues 60–80 form a required for interaction with MBD3L2 region; sequence STFDFRTGKMLMSKMNKSRQR. A Glycyl lysine isopeptide (Lys-Gly) (interchain with G-Cter in SUMO2) cross-link involves residue Lys-73. Ser-85 carries the phosphoserine modification. Glycyl lysine isopeptide (Lys-Gly) (interchain with G-Cter in SUMO2) cross-links involve residues Lys-90 and Lys-92. The residue at position 144 (Ser-144) is a Phosphoserine. Residues 216-245 are a coiled coil; sequence KAFMVTDEDIRKQEELVQQVRKRLEEALMA. Residues 254–267 show a composition bias toward basic and acidic residues; that stretch reads LARDGEAPLDKACA. Residues 254-291 form a disordered region; that stretch reads LARDGEAPLDKACAEDDDEEDEEEEEEEPDPDPEMEHV. Positions 268-291 are enriched in acidic residues; the sequence is EDDDEEDEEEEEEEPDPDPEMEHV.

Heterodimer (via N-terminus) with MBD2. Component of the MeCP1 histone deacetylase complex. Component of the nucleosome remodeling and deacetylase (NuRD) repressor complex, composed of core proteins MTA1, MTA2, MTA3, RBBP4, RBBP7, HDAC1, HDAC2, MBD2, MBD3, and peripherally associated proteins CDK2AP1, CDK2AP2, GATAD2A, GATAD2B, CHD3, CHD4 and CHD5. The exact stoichiometry of the NuRD complex is unknown, and some subunits such as MBD2 and MBD3, GATAD2A and GATAD2B, and CHD3, CHD4 and CHD5 define mutually exclusive NuRD complexes. Interacts with MBD3L2 (via N-terminus); the interaction is direct. Interacts with BCL6. Interacts with CDK2AP1. Interacts with HDAC1. Interacts with MTA2. Interacts with DNMT1. Interacts with GATAD2A. Interacts with GATAD2B. Does not interact with PWWP2A. Does not interact with PWWP2B.

It localises to the nucleus. It is found in the chromosome. In terms of biological role, acts as a component of the histone deacetylase NuRD complex which participates in the remodeling of chromatin. Acts as transcriptional repressor and plays a role in gene silencing. Does not bind to methylated DNA by itself. Binds to a lesser degree DNA containing unmethylated CpG dinucleotides. Recruits histone deacetylases and DNA methyltransferases. This Homo sapiens (Human) protein is Methyl-CpG-binding domain protein 3 (MBD3).